The sequence spans 329 residues: Transcription factor RAX1 (329 aa).

HTH myb-type domains lie at 9–62 (KTKV…LNYL) and 63–117 (RPNI…RKKL). DNA-binding regions (H-T-H motif) lie at residues 38–62 (WISF…LNYL) and 90–113 (WSII…NTKL). 2 stretches are compositionally biased toward low complexity: residues 122 to 131 (SDSSSSAMAS) and 144 to 154 (PTSPTTIPSSS). The disordered stretch occupies residues 122–162 (SDSSSSAMASPYLNPISQDVKRPTSPTTIPSSSYNPYAENP).

Mostly expressed in roots. Also present in shoot tips and flower buds.

It is found in the nucleus. In terms of biological role, transcription activator of genes involved in the regulation of meristematic competence, such as CUC2. Positively regulates axillary meristems (AMs) formation and development, especially at early phases of vegetative growth, probably by specifying a stem cell niche for AM formation. Modulates the negative regulation mediated by gibberellic acid on the timing of developmental phase transitions. This chain is Transcription factor RAX1 (RAX1), found in Arabidopsis thaliana (Mouse-ear cress).